Reading from the N-terminus, the 260-residue chain is Putative protein phosphatase (260 aa).

Residues Phe-9–Leu-254 enclose the PPM-type phosphatase domain.

The enzyme catalyses O-phospho-L-seryl-[protein] + H2O = L-seryl-[protein] + phosphate. It catalyses the reaction O-phospho-L-threonyl-[protein] + H2O = L-threonyl-[protein] + phosphate. In Mycoplasma genitalium (strain ATCC 33530 / DSM 19775 / NCTC 10195 / G37) (Mycoplasmoides genitalium), this protein is Putative protein phosphatase.